The following is a 250-amino-acid chain: ATP synthase subunit a (250 aa).

The next 6 helical transmembrane spans lie at 29 to 49, 84 to 104, 114 to 134, 143 to 163, 193 to 213, and 216 to 236; these read ASLFMAASAAVAVGFLYFATS, FFPLVFSLFMFVLTANLLGMF, IIVTFALAILVIGTVLVYGFY, VFVPSGVPGILLPLVVSIEII, FVASLGALGAVGVGGAVLPLI, and VALTGLEFLVAFLQAYVFAVL.

Belongs to the ATPase A chain family. As to quaternary structure, F-type ATPases have 2 components, CF(1) - the catalytic core - and CF(0) - the membrane proton channel. CF(1) has five subunits: alpha(3), beta(3), gamma(1), delta(1), epsilon(1). CF(0) has three main subunits: a(1), b(2) and c(9-12). The alpha and beta chains form an alternating ring which encloses part of the gamma chain. CF(1) is attached to CF(0) by a central stalk formed by the gamma and epsilon chains, while a peripheral stalk is formed by the delta and b chains.

Its subcellular location is the cell inner membrane. Functionally, key component of the proton channel; it plays a direct role in the translocation of protons across the membrane. The sequence is that of ATP synthase subunit a from Rhizobium leguminosarum bv. trifolii (strain WSM2304).